The sequence spans 166 residues: NAD(P)H-quinone oxidoreductase subunit I, chloroplastic (166 aa).

4Fe-4S ferredoxin-type domains follow at residues 55–84 and 95–124; these read GRIHFEFDKCIACEVCVRVCPIDLPVVDWK and LNYSIDFGICIFCGNCVEYCPTNCLSMTEE. Residues cysteine 64, cysteine 67, cysteine 70, cysteine 74, cysteine 104, cysteine 107, cysteine 110, and cysteine 114 each coordinate [4Fe-4S] cluster.

This sequence belongs to the complex I 23 kDa subunit family. NDH is composed of at least 16 different subunits, 5 of which are encoded in the nucleus. The cofactor is [4Fe-4S] cluster.

It localises to the plastid. The protein localises to the chloroplast thylakoid membrane. It carries out the reaction a plastoquinone + NADH + (n+1) H(+)(in) = a plastoquinol + NAD(+) + n H(+)(out). The catalysed reaction is a plastoquinone + NADPH + (n+1) H(+)(in) = a plastoquinol + NADP(+) + n H(+)(out). In terms of biological role, NDH shuttles electrons from NAD(P)H:plastoquinone, via FMN and iron-sulfur (Fe-S) centers, to quinones in the photosynthetic chain and possibly in a chloroplast respiratory chain. The immediate electron acceptor for the enzyme in this species is believed to be plastoquinone. Couples the redox reaction to proton translocation, and thus conserves the redox energy in a proton gradient. The sequence is that of NAD(P)H-quinone oxidoreductase subunit I, chloroplastic from Encelia californica (Bush sunflower).